Here is a 683-residue protein sequence, read N- to C-terminus: Protein distal antenna (683 aa).

The region spanning threonine 7–leucine 58 is the HTH psq-type domain. Positions lysine 34 to asparagine 54 form a DNA-binding region, H-T-H motif. Disordered stretches follow at residues threonine 220–asparagine 255, serine 336–glycine 369, serine 443–isoleucine 525, asparagine 572–glutamate 597, and glutamate 652–lysine 683. The segment covering serine 227–serine 242 has biased composition (low complexity). 2 stretches are compositionally biased toward polar residues: residues proline 338–glutamine 352 and threonine 445–aspartate 460. Over residues isoleucine 462 to glycine 478 the composition is skewed to acidic residues. Residues serine 575–asparagine 591 show a composition bias toward low complexity.

As to quaternary structure, homomers. Interacts with itself, danr, ey and dac to form a complex (or complexes) containing the RD factors.

It is found in the nucleus. Functionally, probable transcription factor with a role in the retinal determination (RD) network. Regulates ato expression and is required for normal R8 induction and differentiation. Danr appears to repress Dan expression, but Dan is required for Danr expression anterior to the morphogenetic furrow (MF). Dan and Danr lie downstream of so and require dac function for highest levels of expression. Contributes to differentiation of antenna-specific characteristics; effector gene that acts downstream of homothorax (hth), Distal-less (Dll), cut (ct) and spineless (ss) genes to control differentiation of distal antennal structures. This is Protein distal antenna from Drosophila pseudoobscura pseudoobscura (Fruit fly).